Consider the following 795-residue polypeptide: Phenylalanine--tRNA ligase beta subunit (795 aa).

Positions 39-148 (AGAFHGVVVG…ADAPLGTDIR (110 aa)) constitute a tRNA-binding domain. A B5 domain is found at 401 to 476 (PARATIALRR…RVYGYNNIPN (76 aa)). The Mg(2+) site is built by aspartate 454, aspartate 460, glutamate 463, and glutamate 464. An FDX-ACB domain is found at 701–794 (SRFPANRRDI…LKQRFQASLR (94 aa)).

The protein belongs to the phenylalanyl-tRNA synthetase beta subunit family. Type 1 subfamily. Tetramer of two alpha and two beta subunits. The cofactor is Mg(2+).

It localises to the cytoplasm. It catalyses the reaction tRNA(Phe) + L-phenylalanine + ATP = L-phenylalanyl-tRNA(Phe) + AMP + diphosphate + H(+). The sequence is that of Phenylalanine--tRNA ligase beta subunit (pheT) from Dickeya dadantii (strain 3937) (Erwinia chrysanthemi (strain 3937)).